Consider the following 357-residue polypeptide: Membrane-bound lytic murein transglycosylase C (357 aa).

The N-terminal stretch at 1–15 (MKKYLLLALLPFLYA) is a signal peptide. A lipid anchor (N-palmitoyl cysteine) is attached at cysteine 16. The S-diacylglycerol cysteine moiety is linked to residue cysteine 16.

The protein belongs to the transglycosylase Slt family.

Its subcellular location is the cell outer membrane. The catalysed reaction is Exolytic cleavage of the (1-&gt;4)-beta-glycosidic linkage between N-acetylmuramic acid (MurNAc) and N-acetylglucosamine (GlcNAc) residues in peptidoglycan, from either the reducing or the non-reducing ends of the peptidoglycan chains, with concomitant formation of a 1,6-anhydrobond in the MurNAc residue.. Its function is as follows. Murein-degrading enzyme. May play a role in recycling of muropeptides during cell elongation and/or cell division. This Haemophilus influenzae (strain ATCC 51907 / DSM 11121 / KW20 / Rd) protein is Membrane-bound lytic murein transglycosylase C.